The chain runs to 391 residues: NADH-quinone oxidoreductase subunit D (391 aa).

This sequence belongs to the complex I 49 kDa subunit family. In terms of assembly, NDH-1 is composed of 14 different subunits. Subunits NuoB, C, D, E, F, and G constitute the peripheral sector of the complex.

It is found in the cell inner membrane. It carries out the reaction a quinone + NADH + 5 H(+)(in) = a quinol + NAD(+) + 4 H(+)(out). Its function is as follows. NDH-1 shuttles electrons from NADH, via FMN and iron-sulfur (Fe-S) centers, to quinones in the respiratory chain. The immediate electron acceptor for the enzyme in this species is believed to be ubiquinone. Couples the redox reaction to proton translocation (for every two electrons transferred, four hydrogen ions are translocated across the cytoplasmic membrane), and thus conserves the redox energy in a proton gradient. This chain is NADH-quinone oxidoreductase subunit D, found in Rickettsia conorii (strain ATCC VR-613 / Malish 7).